The primary structure comprises 122 residues: Acidic phospholipase A2 (122 aa).

Disulfide bonds link Cys-26–Cys-115, Cys-28–Cys-44, Cys-43–Cys-95, Cys-49–Cys-122, Cys-50–Cys-88, Cys-57–Cys-81, and Cys-75–Cys-86. Ca(2+)-binding residues include Tyr-27, Gly-29, and Gly-31. His-47 is a catalytic residue. Asp-48 is a Ca(2+) binding site. The active site involves Asp-89.

May form tetramers. Ca(2+) is required as a cofactor. In terms of tissue distribution, expressed by the venom gland.

The protein resides in the secreted. It catalyses the reaction a 1,2-diacyl-sn-glycero-3-phosphocholine + H2O = a 1-acyl-sn-glycero-3-phosphocholine + a fatty acid + H(+). In terms of biological role, PLA2 catalyzes the calcium-dependent hydrolysis of the 2-acyl groups in 3-sn-phosphoglycerides. In vivo, is non-lethal to mice when intravenously injected up to a concentration of 30 ug, however does show significant edematogenic activity at the injection site. The sequence is that of Acidic phospholipase A2 from Lachesis acrochorda (Chocoan bushmaster).